Reading from the N-terminus, the 1072-residue chain is 5'-3' exoribonuclease 2 (1072 aa).

The stretch at 118–144 forms a coiled coil; it reads RRFRAAREAMEKEEDKQKFVELLKKQN. The CCHC-type zinc-finger motif lies at 269–286; it reads RLCKICGQKGHDAMNCKG. Basic and acidic residues predominate over residues 414–435; sequence KETEDRREAGFKRRKLADEARQ. Disordered regions lie at residues 414 to 459, 509 to 577, 865 to 911, and 943 to 1072; these read KETE…GFSF, QGTS…AEPT, ASRS…GGGG, and GGGY…RGYR. Over residues 518 to 543 the composition is skewed to low complexity; sequence AESTETPAETAAAAPATEEQAAPPAA. Gly residues predominate over residues 892–911; sequence GPGGGQQGGRGRGGYQGGGG. Positions 955 to 967 are enriched in pro residues; sequence GPPPGWQPPPPPG. 3 stretches are compositionally biased toward gly residues: residues 983 to 1000, 1025 to 1036, and 1056 to 1072; these read AYGG…GSSR, YGQGGSRGGYQG, and GYRG…RGYR.

This sequence belongs to the 5'-3' exonuclease family. XRN2/RAT1 subfamily. Interacts with rai1; the interaction is direct, stabilizes exr-1 protein structure and may stimulate its exoribonuclease activity. The interaction also stimulates rai1 pyrophosphohydrolase activity, probably by recruiting it to mRNA substrates.

The protein localises to the nucleus. Functionally, possesses 5'-&gt;3' exoribonuclease activity. Required for the processing of nuclear mRNA and rRNA precursors. May promote the termination of transcription by RNA polymerase II. Essential for vegetative cell growth and chromosome segregation. The polypeptide is 5'-3' exoribonuclease 2 (exr-1) (Neurospora crassa (strain ATCC 24698 / 74-OR23-1A / CBS 708.71 / DSM 1257 / FGSC 987)).